The following is a 252-amino-acid chain: 5'-nucleotidase SurE (252 aa).

A divalent metal cation-binding residues include Asp8, Asp9, Ser39, and Asn91.

It belongs to the SurE nucleotidase family. The cofactor is a divalent metal cation.

Its subcellular location is the cytoplasm. The catalysed reaction is a ribonucleoside 5'-phosphate + H2O = a ribonucleoside + phosphate. In terms of biological role, nucleotidase that shows phosphatase activity on nucleoside 5'-monophosphates. This Bordetella petrii (strain ATCC BAA-461 / DSM 12804 / CCUG 43448) protein is 5'-nucleotidase SurE.